We begin with the raw amino-acid sequence, 340 residues long: Ketol-acid reductoisomerase (NADP(+)) (340 aa).

The 178-residue stretch at 5–182 (MEYEKDVKVA…GSARVGLLET (178 aa)) folds into the KARI N-terminal Rossmann domain. NADP(+) is bound by residues 26–29 (YGSQ), arginine 49, serine 53, and 83–86 (DEIQ). The active site involves histidine 108. An NADP(+)-binding site is contributed by glycine 134. Residues 183 to 328 (TYKEETEEDL…AELRKAMPFV (146 aa)) form the KARI C-terminal knotted domain. Mg(2+) contacts are provided by aspartate 191, glutamate 195, glutamate 227, and glutamate 231. Serine 252 is a binding site for substrate.

Belongs to the ketol-acid reductoisomerase family. Mg(2+) serves as cofactor.

It catalyses the reaction (2R)-2,3-dihydroxy-3-methylbutanoate + NADP(+) = (2S)-2-acetolactate + NADPH + H(+). The enzyme catalyses (2R,3R)-2,3-dihydroxy-3-methylpentanoate + NADP(+) = (S)-2-ethyl-2-hydroxy-3-oxobutanoate + NADPH + H(+). The protein operates within amino-acid biosynthesis; L-isoleucine biosynthesis; L-isoleucine from 2-oxobutanoate: step 2/4. It participates in amino-acid biosynthesis; L-valine biosynthesis; L-valine from pyruvate: step 2/4. In terms of biological role, involved in the biosynthesis of branched-chain amino acids (BCAA). Catalyzes an alkyl-migration followed by a ketol-acid reduction of (S)-2-acetolactate (S2AL) to yield (R)-2,3-dihydroxy-isovalerate. In the isomerase reaction, S2AL is rearranged via a Mg-dependent methyl migration to produce 3-hydroxy-3-methyl-2-ketobutyrate (HMKB). In the reductase reaction, this 2-ketoacid undergoes a metal-dependent reduction by NADPH to yield (R)-2,3-dihydroxy-isovalerate. In Streptococcus sanguinis (strain SK36), this protein is Ketol-acid reductoisomerase (NADP(+)).